The sequence spans 84 residues: Small ribosomal subunit protein uS17 (84 aa).

Belongs to the universal ribosomal protein uS17 family. In terms of assembly, part of the 30S ribosomal subunit.

Its function is as follows. One of the primary rRNA binding proteins, it binds specifically to the 5'-end of 16S ribosomal RNA. This is Small ribosomal subunit protein uS17 from Treponema pallidum (strain Nichols).